The sequence spans 316 residues: Vacuolar membrane protein YNL058C (316 aa).

Positions 32 to 60 are disordered; that stretch reads KPTSSVVSETSSKSLPSLTSSAFSTSSGA. The chain crosses the membrane as a helical span at residues 93–113; sequence VYIAVGAVIGAIFISILIWWL. Residues S148, S256, and S276 each carry the phosphoserine modification. The segment at 240 to 304 is disordered; it reads EEEERKLNLN…KAHKRQAPSM (65 aa). Residues 256 to 271 show a composition bias toward basic and acidic residues; it reads SPERKEKKINSMEGYH.

Belongs to the PRM5 family.

Its subcellular location is the vacuole membrane. The protein is Vacuolar membrane protein YNL058C of Saccharomyces cerevisiae (strain ATCC 204508 / S288c) (Baker's yeast).